The chain runs to 1168 residues: Zinc finger CCHC domain-containing protein 2 (1168 aa).

Disordered stretches follow at residues 1-87 (MLRM…GGHA), 209-242 (EGSR…CAKL), 561-693 (KRSL…LGTE), and 932-978 (ATSA…SDST). The span at 43 to 66 (PPPPPPTGLPRGPPPPPPSPPRGL) shows a compositional bias: pro residues. Residues 67–78 (EPPVASGPTAGA) are compositionally biased toward low complexity. Residues 216–227 (EDEPGGDDEQDA) show a composition bias toward acidic residues. Residues 233–242 (GPEGGGCAKL) are compositionally biased toward gly residues. The span at 574–588 (PQVEKEKIKKTENRL) shows a compositional bias: basic and acidic residues. Residues 626–635 (SSESYSSPSS) are compositionally biased toward low complexity. Residues 636-655 (PRHDGRESLESEEEKDRDTD) are compositionally biased toward basic and acidic residues. Positions 932 to 949 (ATSAQPASTGISPAQSTV) are enriched in polar residues. The span at 951–965 (PAVPTHTPGPAPSPS) shows a compositional bias: pro residues. The segment covering 966 to 978 (PALTHSTAQSDST) has biased composition (polar residues). Residues 1121 to 1138 (VSCYNCGVSGHYAQDCKQ) form a CCHC-type zinc finger.

The chain is Zinc finger CCHC domain-containing protein 2 (Zcchc2) from Rattus norvegicus (Rat).